The chain runs to 246 residues: Osmotin-like protein TPM-1 (246 aa).

A signal peptide spans 1–21 (MAYLRSSFVFFLLAFVTYTYA). 8 cysteine pairs are disulfide-bonded: cysteine 30-cysteine 225, cysteine 72-cysteine 82, cysteine 87-cysteine 93, cysteine 141-cysteine 213, cysteine 146-cysteine 196, cysteine 154-cysteine 164, cysteine 168-cysteine 177, and cysteine 178-cysteine 183.

It belongs to the thaumatin family.

The protein localises to the vacuole. It carries out the reaction Endohydrolysis of (1-&gt;3)- or (1-&gt;4)-linkages in beta-D-glucans when the glucose residue whose reducing group is involved in the linkage to be hydrolyzed is itself substituted at C-3.. Antifungal protein that inhibits the growth of several phytopathogenic fungi (e.g. Trichothecium roseum, Fusarium oxysporum, Phytophthora citrophthora and Colletotrichum coccodes). May bind to beta-glucans and have beta-1,3-D-glucanase activity. The polypeptide is Osmotin-like protein TPM-1 (Solanum lycopersicum (Tomato)).